The following is a 161-amino-acid chain: Protein ZMO0507 (161 aa).

This sequence belongs to the free Met sulfoxide reductase family.

The polypeptide is Protein ZMO0507 (Zymomonas mobilis subsp. mobilis (strain ATCC 31821 / ZM4 / CP4)).